A 409-amino-acid chain; its full sequence is Translation initiation factor 2 subunit gamma (409 aa).

The tr-type G domain maps to 7–203; sequence QPEVNIGLVG…AIEREIPTPE (197 aa). The interval 16 to 23 is G1; it reads GHVDHGKT. Residues aspartate 19, threonine 23, glycine 44, and serine 46 each coordinate Mg(2+). 19-24 is a GTP binding site; sequence DHGKTT. Residues 44–48 are G2; it reads GISIR. The segment at 90–93 is G3; the sequence is DAPG. GTP-binding positions include 146-149 and 181-183; these read NKID and SAQ. The interval 146 to 149 is G4; sequence NKID. The segment at 181 to 183 is G5; the sequence is SAQ.

The protein belongs to the TRAFAC class translation factor GTPase superfamily. Classic translation factor GTPase family. EIF2G subfamily. In terms of assembly, heterotrimer composed of an alpha, a beta and a gamma chain. It depends on Mg(2+) as a cofactor.

It carries out the reaction GTP + H2O = GDP + phosphate + H(+). Its function is as follows. eIF-2 functions in the early steps of protein synthesis by forming a ternary complex with GTP and initiator tRNA. In Haloquadratum walsbyi (strain DSM 16790 / HBSQ001), this protein is Translation initiation factor 2 subunit gamma.